The primary structure comprises 259 residues: Putative cysteine-rich repeat secretory protein 25 (259 aa).

Positions 1–31 are cleaved as a signal peptide; sequence MSSSFLSRPLVSVYVFAMVTMQLLFMQSVLS. 2 consecutive Gnk2-homologous domains span residues 37-138 and 144-256; these read AYLN…SIYT and YRHI…LYPF.

It belongs to the cysteine-rich repeat secretory protein family.

Its subcellular location is the secreted. The polypeptide is Putative cysteine-rich repeat secretory protein 25 (CRRSP25) (Arabidopsis thaliana (Mouse-ear cress)).